Consider the following 1187-residue polypeptide: Metabotropic glutamate receptor-like protein Q (1187 aa).

The Extracellular segment spans residues M1–T735. Residues N35, N44, N55, N177, N258, N275, N397, N402, N462, N526, N527, N557, N562, and N684 are each glycosylated (N-linked (GlcNAc...) asparagine). The helical transmembrane segment at V736–I756 threads the bilayer. Over A757–N768 the chain is Cytoplasmic. Residues I769–S789 traverse the membrane as a helical segment. The Extracellular portion of the chain corresponds to I790–S796. Residue N794 is glycosylated (N-linked (GlcNAc...) asparagine). A helical membrane pass occupies residues C797–L817. The Cytoplasmic portion of the chain corresponds to K818 to K843. The helical transmembrane segment at Y844–P864 threads the bilayer. The Extracellular segment spans residues S865–Y888. The chain crosses the membrane as a helical span at residues V889–A909. The Cytoplasmic portion of the chain corresponds to M910–S925. A helical membrane pass occupies residues L926 to F946. The Extracellular segment spans residues Y947 to T955. Residues I956 to F976 traverse the membrane as a helical segment. The Cytoplasmic portion of the chain corresponds to I977 to L1095. Residues I1074–S1105 are compositionally biased toward polar residues. The tract at residues I1074–S1187 is disordered. The span at K1114–I1124 shows a compositional bias: basic residues. The span at I1125–N1174 shows a compositional bias: low complexity.

This sequence belongs to the G-protein coupled receptor 3 family. GABA-B receptor subfamily.

The protein resides in the membrane. This is Metabotropic glutamate receptor-like protein Q (grlQ) from Dictyostelium discoideum (Social amoeba).